Consider the following 213-residue polypeptide: Large ribosomal subunit protein uL4 (213 aa).

The disordered stretch occupies residues 51 to 90; the sequence is TASTLTKAEVRGGGRKPYKQKHTGRARQGSIRNPHYVGGG. A compositionally biased stretch (basic residues) spans 63–75; that stretch reads GGRKPYKQKHTGR.

The protein belongs to the universal ribosomal protein uL4 family. In terms of assembly, part of the 50S ribosomal subunit.

Its function is as follows. One of the primary rRNA binding proteins, this protein initially binds near the 5'-end of the 23S rRNA. It is important during the early stages of 50S assembly. It makes multiple contacts with different domains of the 23S rRNA in the assembled 50S subunit and ribosome. Forms part of the polypeptide exit tunnel. The chain is Large ribosomal subunit protein uL4 from Malacoplasma penetrans (strain HF-2) (Mycoplasma penetrans).